A 334-amino-acid chain; its full sequence is Catabolite repressor/activator (334 aa).

In terms of domain architecture, HTH lacI-type spans 1–58 (MKLDEIARLAGVSRTTASYVINGKAKQYRVSDKTVEKVMAVVREHNYHPNAVAAGLRA). Residues 3-22 (LDEIARLAGVSRTTASYVIN) constitute a DNA-binding region (H-T-H motif).

Homotetramer.

Its function is as follows. Global transcriptional regulator, which plays an important role in the regulation of carbon metabolism. The chain is Catabolite repressor/activator (cra) from Salmonella typhimurium (strain LT2 / SGSC1412 / ATCC 700720).